The following is a 220-amino-acid chain: Peptide methionine sulfoxide reductase MsrA (220 aa).

The active site involves Cys54.

The protein belongs to the MsrA Met sulfoxide reductase family.

The enzyme catalyses L-methionyl-[protein] + [thioredoxin]-disulfide + H2O = L-methionyl-(S)-S-oxide-[protein] + [thioredoxin]-dithiol. It catalyses the reaction [thioredoxin]-disulfide + L-methionine + H2O = L-methionine (S)-S-oxide + [thioredoxin]-dithiol. Its function is as follows. Has an important function as a repair enzyme for proteins that have been inactivated by oxidation. Catalyzes the reversible oxidation-reduction of methionine sulfoxide in proteins to methionine. The chain is Peptide methionine sulfoxide reductase MsrA from Salinispora arenicola (strain CNS-205).